Here is a 1024-residue protein sequence, read N- to C-terminus: NLR family CARD domain-containing protein 4 (1024 aa).

Positions 1-88 (MNFIRNNRRA…FVYQDLTGQN (88 aa)) constitute a CARD domain. Positions 95–298 (EEDLNVLAQN…HVGALTAEVG (204 aa)) are nucleotide-binding domain (NBD). Residues threonine 135, 172 to 177 (GKGKST), and histidine 443 contribute to the ATP site. The NACHT domain occupies 163-476 (SPCLIEGESG…VSKGNSYLNK (314 aa)). A winged-helix domain (WHD) region spans residues 356–463 (AHTQTMLFQT…RLSSLLTSKE (108 aa)). Serine 533 bears the Phosphoserine mark. LRR repeat units follow at residues 578–598 (FFQG…LFDF), 656–679 (KQEF…DIKY), 735–758 (VTGL…LIDS), 762–785 (LKNL…NLAE), 787–812 (LRSL…DYIV), 824–847 (EMKL…LHNL), 848–870 (IKLS…ALQE), 878–902 (LGEL…LLKQ), 911–933 (KLGL…FLEM), 936–963 (LRDL…VFEN), 965–985 (KQLV…ALVR), and 999–1021 (EVKL…TFKL).

In terms of assembly, homooligomer; homooligomerizes following activation of Naip proteins by pathogenic proteins such as S.typhimurium (Salmonella) flagellin or PrgJ. Component of the NLRC4 inflammasome, at least composed of NLRC4, caspase-1 (CASP1) and some NAIP protein (Naip, Naip2 or Naip5). Interacts with Naip5 and Naip6; following Naip5 and Naip6 engagement by Salmonella flagellin. Interacts with Naip2; following Naip2 engagement by Salmonella PrgJ. The inflammasome is a huge complex that contains multiple copies of NLRC4 and a single Naip protein chain. Some NLRC4 inflammasomes contain PYCARD/ASC, while some others directly contact and activate CASP1. Interacts with EIF2AK2/PKR. Post-translationally, phosphorylated at Ser-533 following infection of macrophages with S.typhimurium (Salmonella). Phosphorylation is essential for NLRC4 inflammasome function to promote caspase-1 activation and pyroptosis. PRKCD phosphorylates Ser-533 in vitro. Expressed by intestinal mononuclear phagocytes.

The protein resides in the cytoplasm. The protein localises to the cytosol. It is found in the inflammasome. Its function is as follows. Key component of inflammasomes that indirectly senses specific proteins from pathogenic bacteria and fungi and responds by assembling an inflammasome complex that promotes caspase-1 activation, cytokine production and macrophage pyroptosis. The NLRC4 inflammasome is activated as part of the innate immune response to a range of intracellular bacteria. It senses pathogenic proteins of the type III secretion system (T3SS) and type IV secretion system (T4SS) such as flagellin and PrgJ-like rod proteins via the Naip proteins (Naip1, Naip2 or Naip5): specific Naip proteins recognize and bind pathogenic proteins, driving assembly and activation of the NLRC4 inflammasome. The NLRC4 inflammasome senses Gram-negative bacteria such as L.pneumophila and P.aeruginosa, enteric pathogens S.typhimurium (Salmonella) and S.flexneri and fungal pathogen C.albicans. In intestine, the NLRC4 inflammasome is able to discriminate between commensal and pathogenic bacteria and specifically drives production of interleukin-1 beta (IL1B) in response to infection by Salmonella or P.aeruginosa. In case of L.pneumophila infection the inflammasome acts by activating caspase-7. The protein is NLR family CARD domain-containing protein 4 (Nlrc4) of Mus musculus (Mouse).